The primary structure comprises 702 residues: Elongation factor G (702 aa).

The tr-type G domain maps to 8 to 290 (SRYRNIGISA…AIIEFLPAPN (283 aa)). Residues 17 to 24 (AHIDAGKT), 88 to 92 (DTPGH), and 142 to 145 (NKMD) contribute to the GTP site.

The protein belongs to the TRAFAC class translation factor GTPase superfamily. Classic translation factor GTPase family. EF-G/EF-2 subfamily.

It localises to the cytoplasm. Its function is as follows. Catalyzes the GTP-dependent ribosomal translocation step during translation elongation. During this step, the ribosome changes from the pre-translocational (PRE) to the post-translocational (POST) state as the newly formed A-site-bound peptidyl-tRNA and P-site-bound deacylated tRNA move to the P and E sites, respectively. Catalyzes the coordinated movement of the two tRNA molecules, the mRNA and conformational changes in the ribosome. The chain is Elongation factor G from Buchnera aphidicola subsp. Acyrthosiphon pisum (strain 5A).